Here is a 509-residue protein sequence, read N- to C-terminus: Photosystem II CP47 reaction center protein (509 aa).

The next 6 membrane-spanning stretches (helical) occupy residues 21–36, 101–115, 140–156, 203–218, 237–252, and 457–472; these read SVHL…WAGS, IVLS…IWHW, GIHL…FGAF, IAAG…FHLN, VLSS…SFVV, and NFAL…HGSR.

This sequence belongs to the PsbB/PsbC family. PsbB subfamily. In terms of assembly, PSII is composed of 1 copy each of membrane proteins PsbA, PsbB, PsbC, PsbD, PsbE, PsbF, PsbH, PsbI, PsbJ, PsbK, PsbL, PsbM, PsbT, PsbY, PsbZ, Psb30/Ycf12, at least 3 peripheral proteins of the oxygen-evolving complex and a large number of cofactors. It forms dimeric complexes. Requires Binds multiple chlorophylls. PSII binds additional chlorophylls, carotenoids and specific lipids. as cofactor.

It is found in the plastid. The protein resides in the chloroplast thylakoid membrane. One of the components of the core complex of photosystem II (PSII). It binds chlorophyll and helps catalyze the primary light-induced photochemical processes of PSII. PSII is a light-driven water:plastoquinone oxidoreductase, using light energy to abstract electrons from H(2)O, generating O(2) and a proton gradient subsequently used for ATP formation. In Cyanidium caldarium (Red alga), this protein is Photosystem II CP47 reaction center protein.